The chain runs to 115 residues: Protein translation factor SUI1 homolog (115 aa).

This sequence belongs to the SUI1 family.

In terms of biological role, probably involved in translation. The chain is Protein translation factor SUI1 homolog from Sporobolus stapfianus (Ressurection grass).